A 136-amino-acid chain; its full sequence is MTSVGVPIKILHEAEGHMVTLETVTGEVYRGKLSEAEDNMNCQLAETVVTFRDGRSHQLDNVFIRGNKIRFMILPDMLKNAPMFKNIGRAQKGAIGMGLGGLDQRGRGRGTAFRRPMGRGGPRGMSRPGGAPTFRG.

Positions 6 to 78 (VPIKILHEAE…IRFMILPDML (73 aa)) constitute a Sm domain. Positions 98–136 (GLGGLDQRGRGRGTAFRRPMGRGGPRGMSRPGGAPTFRG) are disordered.

It belongs to the snRNP core protein family.

It localises to the nucleus. The protein localises to the cytoplasm. The protein resides in the cytosol. Its function is as follows. Plays a role in pre-mRNA splicing as a core component of the spliceosomal U1, U2, U4 and U5 small nuclear ribonucleoproteins (snRNPs), the building blocks of the spliceosome. The polypeptide is Small nuclear ribonucleoprotein Sm D3 (snr-1) (Caenorhabditis elegans).